Consider the following 601-residue polypeptide: Bifunctional protein GlmU (601 aa).

The segment at 1–375 (MKSDLAIVIL…SELLLGVNNR (375 aa)) is pyrophosphorylase. Residues 10–13 (LAAG), K24, Q75, and 81–82 (GT) each bind UDP-N-acetyl-alpha-D-glucosamine. D165 lines the Mg(2+) pocket. The UDP-N-acetyl-alpha-D-glucosamine site is built by G201, E216, N230, and N373. N373 provides a ligand contact to Mg(2+). The interval 376-396 (VQLAKTEKILNDQIIKRWQLY) is linker. The N-acetyltransferase stretch occupies residues 397–601 (GVTIKSPETT…PKWAENRGDG (205 aa)). UDP-N-acetyl-alpha-D-glucosamine-binding residues include R478 and K496. The active-site Proton acceptor is the H508. UDP-N-acetyl-alpha-D-glucosamine-binding residues include Y511 and N522. Residues A525, 531 to 532 (NY), and A568 each bind acetyl-CoA.

This sequence in the N-terminal section; belongs to the N-acetylglucosamine-1-phosphate uridyltransferase family. In the C-terminal section; belongs to the transferase hexapeptide repeat family. In terms of assembly, homotrimer. Mg(2+) is required as a cofactor.

Its subcellular location is the cytoplasm. The catalysed reaction is alpha-D-glucosamine 1-phosphate + acetyl-CoA = N-acetyl-alpha-D-glucosamine 1-phosphate + CoA + H(+). It catalyses the reaction N-acetyl-alpha-D-glucosamine 1-phosphate + UTP + H(+) = UDP-N-acetyl-alpha-D-glucosamine + diphosphate. The protein operates within nucleotide-sugar biosynthesis; UDP-N-acetyl-alpha-D-glucosamine biosynthesis; N-acetyl-alpha-D-glucosamine 1-phosphate from alpha-D-glucosamine 6-phosphate (route II): step 2/2. It functions in the pathway nucleotide-sugar biosynthesis; UDP-N-acetyl-alpha-D-glucosamine biosynthesis; UDP-N-acetyl-alpha-D-glucosamine from N-acetyl-alpha-D-glucosamine 1-phosphate: step 1/1. It participates in bacterial outer membrane biogenesis; LPS lipid A biosynthesis. Functionally, catalyzes the last two sequential reactions in the de novo biosynthetic pathway for UDP-N-acetylglucosamine (UDP-GlcNAc). The C-terminal domain catalyzes the transfer of acetyl group from acetyl coenzyme A to glucosamine-1-phosphate (GlcN-1-P) to produce N-acetylglucosamine-1-phosphate (GlcNAc-1-P), which is converted into UDP-GlcNAc by the transfer of uridine 5-monophosphate (from uridine 5-triphosphate), a reaction catalyzed by the N-terminal domain. In Tropheryma whipplei (strain TW08/27) (Whipple's bacillus), this protein is Bifunctional protein GlmU.